The following is a 206-amino-acid chain: MDLLTTANKTPRIAKSRPVRIAIIITQKTNDLHATVPCFLWRKARYAVDLISAEAKASIMLEMGIHVRCDNTLSKTNFNQYTAAFIPHGNTTRLVEIDKLRKDLEKFVYKPKGPMRWLFSSGNGACVLKEFDLIAPDQLVTVQNEKEMVKLLGKNFIKQPVHVDKNIISCANSCGLTKFSFKVIEELSGIELARKTANLVDHIYKG.

This is an uncharacterized protein from Mycoplasma pneumoniae (strain ATCC 29342 / M129 / Subtype 1) (Mycoplasmoides pneumoniae).